The sequence spans 681 residues: DNA ligase (681 aa).

Residues 33-37 (DGQFD), 83-84 (SL), and glutamate 113 each bind NAD(+). Lysine 115 serves as the catalytic N6-AMP-lysine intermediate. NAD(+) is bound by residues arginine 136, glutamate 176, lysine 292, and lysine 316. 4 residues coordinate Zn(2+): cysteine 410, cysteine 413, cysteine 429, and cysteine 435. A BRCT domain is found at 599-681 (SIPRNLEGLS…RALLADGPPA (83 aa)).

It belongs to the NAD-dependent DNA ligase family. LigA subfamily. Requires Mg(2+) as cofactor. Mn(2+) is required as a cofactor.

It catalyses the reaction NAD(+) + (deoxyribonucleotide)n-3'-hydroxyl + 5'-phospho-(deoxyribonucleotide)m = (deoxyribonucleotide)n+m + AMP + beta-nicotinamide D-nucleotide.. Its function is as follows. DNA ligase that catalyzes the formation of phosphodiester linkages between 5'-phosphoryl and 3'-hydroxyl groups in double-stranded DNA using NAD as a coenzyme and as the energy source for the reaction. It is essential for DNA replication and repair of damaged DNA. This Mycobacteroides abscessus (strain ATCC 19977 / DSM 44196 / CCUG 20993 / CIP 104536 / JCM 13569 / NCTC 13031 / TMC 1543 / L948) (Mycobacterium abscessus) protein is DNA ligase.